Reading from the N-terminus, the 992-residue chain is MESFEGQGDSRQSPDNERGDNVQTTGEHDQDPGPGPPSSGASERLVPEESYSRDQQPWGQSRGDENRGWMQRIRRRRRRRAALSGHLLDTEDNVPPWLPPHDITPYTARNIRDAACRAVKQSHLQALSNLILDSGLDTQHILCFVMAARQRLQDIRRGPLVAEGGVGWRHWLLTSPSQSWPMGYRTATLRTLTPVPNRVGADSIMLTATFGCQNAARTLNTFSATVWTPPHAGPREQERYAREAEVRFLRGKWQRRYRRIYDLIELCGSLHHIWQNLLQTEENLLDFVRFMGVMSSCNNPAVNYWFHKTIGNFKPYYPWNAPPNENPYHARRGIKEHVIQNAFRKAQIQGLSMLATGGEPRGDATSETSSDEDTGRQGSDVELESSDDELPYIDPNMEPVQQRPVMFVSRVPAKKPRKLPWPTPKTHPVKRTNVKTSDRSDKAEAQSTPERPGPSEQSSVTVEPAHPTPVEMPMVILHQPPPVPKPVPVKPTPPPSRRRRGACVVYDDDVIEVIDVETTEDSSSVSQPNKPHRKHQDGFQRSGRRQKRAAPPTVSPSDTGPPAVGPPAAGPPAAGPPAAGPPAAGPPAAGPPAAGPRILAPLSAGPPAAGPHIVTPPSARPRIMAPPVVRMFMRERQLPQSTGRKPQCFWEMRAGREITQMQQEPSSHLQSATQPTTPRPSWAPSVCALSVMDAGKAQPIESSHLSSMSPTQPISHEEQPRYEDPDAPLDLSLHPDVAAQPAPQAPYQGYQEPPAPQAPYQGYQEPPPPQAPYQGYQEPPAHGLQSSSYPGYAGPWTPRSQHPCYRHPWAPWSQDPVHGHTQGPWDPRAPHLPPQWDGSAGHGQDQVSQFPHLQSETGPPRLQLSLVPLVSSSAPSWSSPQPRAPIRPIPTRFPPPPMPLQDSMAVGCDSSGTACPSMPFASDYSQGAFTPLDINATTPKRPRVEESSHGPARCSQATAEAQEILSDNSEISVFPKDAKQTDYDASTESELD.

Residues 1–70 (MESFEGQGDS…SRGDENRGWM (70 aa)) are disordered. The segment covering 12 to 31 (QSPDNERGDNVQTTGEHDQD) has biased composition (basic and acidic residues). Residues 130–159 (LILDSGLDTQHILCFVMAARQRLQDIRRGP) form an interaction with host PIM1 region. 3 disordered regions span residues 355-905 (ATGG…DSMA), 931-954 (PLDI…PARC), and 967-992 (DNSE…SELD). Positions 381 to 391 (VELESSDDELP) are enriched in acidic residues. Over residues 445-461 (AQSTPERPGPSEQSSVT) the composition is skewed to polar residues. Positions 479–495 (QPPPVPKPVPVKPTPPP) are enriched in pro residues. A compositionally biased stretch (acidic residues) spans 506 to 520 (YDDDVIEVIDVETTE). The stretch at 551 to 555 (PPTVS) is one 1-1; approximate repeat. A 12 X 5 AA approximate tandem repeats of P-P-A-A-G region spans residues 551 to 610 (PPTVSPSDTGPPAVGPPAAGPPAAGPPAAGPPAAGPPAAGPPAAGPRILAPLSAGPPAAG). One copy of the 2-1; approximate repeat lies at 556 to 560 (PSDTG). Residues 561–565 (PPAVG) form a 3-1; approximate repeat. A compositionally biased stretch (pro residues) spans 563 to 594 (AVGPPAAGPPAAGPPAAGPPAAGPPAAGPPAA). 6 consecutive repeat copies span residues 566-570 (PPAAG), 571-575 (PPAAG), 576-580 (PPAAG), 581-585 (PPAAG), 586-590 (PPAAG), and 591-595 (PPAAG). Over residues 595 to 611 (GPRILAPLSAGPPAAGP) the composition is skewed to low complexity. A 10-1; approximate repeat occupies 596-600 (PRILA). One copy of the 11-1; approximate repeat lies at 601–605 (PLSAG). Residues 606-610 (PPAAG) form a 12-1 repeat. 2 stretches are compositionally biased toward polar residues: residues 659–676 (TQMQ…TQPT) and 700–714 (IESS…TQPI). Basic and acidic residues predominate over residues 715–724 (SHEEQPRYED). Composition is skewed to low complexity over residues 738 to 764 (AAQP…QGYQ) and 772 to 781 (PYQGYQEPPA). Tandem repeats lie at residues 741-753 (PAPQ…YQEP), 754-766 (PAPQ…YQEP), and 767-779 (PPPQ…YQEP). Residues 741-779 (PAPQAPYQGYQEPPAPQAPYQGYQEPPPPQAPYQGYQEP) are 3 X 13 AA tandem repeats of P-[AP]-P-Q-A-P-Y-Q-G-Y-Q-E-P. Positions 845-857 (DQVSQFPHLQSET) are enriched in polar residues. The segment covering 859 to 881 (PPRLQLSLVPLVSSSAPSWSSPQ) has biased composition (low complexity). The span at 882–899 (PRAPIRPIPTRFPPPPMP) shows a compositional bias: pro residues.

This sequence belongs to the herpesviridae EBNA-6 family. In terms of assembly, interacts with host CTPB1; this interaction leads to gene repression, but also seems to interfere with the repressive function of CtBP pre-bound to DNA, leading to EBNA6 mediated up-regulation of many host genes. Interacts with host MYC; this interaction enhances MYC stability. Interacts (via N-terminus) with host RBPJ. Interacts (via N-terminus) with host histone H2AX; this interaction facilitates H2AX proteasomal degradation. Interacts with host TP73; this interaction inhibits TP73-mediated apoptotic pathway. Interacts (via N-terminus) with host PIM1; this interaction upregulates and stabilizes PIM1 and induces cell proliferation by inhibiting the growth suppressive properties of p21.

It localises to the host nucleus. The protein localises to the host nucleus matrix. Its function is as follows. Plays an essential role for the activation and immortalization of human B-cells. Represses transcription of viral promoters TP1 and Cp through interaction with host RBPJ, and inhibits EBNA2-mediated activation of these promoters. Targets host chromatin through interactions with host transcription factors, especially RBPJ and IRF4. Alternatively, EBNA6 also regulates the transcription of the EBV oncogene LMP1 in a cell cycle-dependent manner. Modulates the activity of several host proteins involved in cell cycle regulation including host cyclin A, MYC, RB, p21 and p27 mainly through binding to the host SCF(SKP2) complex. Inhibits the promoter of host H2AX and targets H2AX to proteasomal degradation in order to promote latency and cell proliferation. Upregulates host PIM1 expression and stabilization. Potentiates PIM1 to promote cell proliferation by inhibiting the growth suppressive properties of p21. The sequence is that of Epstein-Barr nuclear antigen 6 (EBNA6) from Epstein-Barr virus (strain B95-8) (HHV-4).